The chain runs to 698 residues: Methionine--tRNA ligase (698 aa).

The 'HIGH' region motif lies at 18–28; it reads PYANGDLHVGH. Zn(2+)-binding residues include Cys149, Cys152, Cys161, and Cys165. Thr350 is a binding site for ATP. The segment at 567 to 590 is disordered; sequence EAADAGDEEGEDEDEEPPAADLEP. Acidic residues predominate over residues 570 to 584; it reads DAGDEEGEDEDEEPP. The tRNA-binding domain maps to 600–698; that stretch reads DFQDLDIRVA…EDAEPGTKVQ (99 aa).

The protein belongs to the class-I aminoacyl-tRNA synthetase family. MetG type 1 subfamily. Homodimer. Zn(2+) serves as cofactor.

It localises to the cytoplasm. The catalysed reaction is tRNA(Met) + L-methionine + ATP = L-methionyl-tRNA(Met) + AMP + diphosphate. Is required not only for elongation of protein synthesis but also for the initiation of all mRNA translation through initiator tRNA(fMet) aminoacylation. The chain is Methionine--tRNA ligase from Natronomonas pharaonis (strain ATCC 35678 / DSM 2160 / CIP 103997 / JCM 8858 / NBRC 14720 / NCIMB 2260 / Gabara) (Halobacterium pharaonis).